The following is a 532-amino-acid chain: CTP synthase (532 aa).

The amidoligase domain stretch occupies residues 1–267; sequence MAKFIFVTGG…QDIIIEQLQL (267 aa). Residue Ser-13 participates in CTP binding. Position 13 (Ser-13) interacts with UTP. 14–19 provides a ligand contact to ATP; it reads GLGKGI. Residue Tyr-54 coordinates L-glutamine. Asp-71 serves as a coordination point for ATP. Mg(2+)-binding residues include Asp-71 and Glu-141. Residues 148–150, 188–193, and Lys-224 contribute to the CTP site; these read DIE and KTKPIQ. UTP-binding positions include 188–193 and Lys-224; that span reads KTKPIQ. Positions 292–532 constitute a Glutamine amidotransferase type-1 domain; the sequence is EISFVGKYIE…FIKAIVENNK (241 aa). Gly-354 contacts L-glutamine. The active-site Nucleophile; for glutamine hydrolysis is Cys-381. L-glutamine-binding positions include 382–385, Glu-405, and Arg-461; that span reads LGMQ. Catalysis depends on residues His-506 and Glu-508.

This sequence belongs to the CTP synthase family. As to quaternary structure, homotetramer.

The enzyme catalyses UTP + L-glutamine + ATP + H2O = CTP + L-glutamate + ADP + phosphate + 2 H(+). The catalysed reaction is L-glutamine + H2O = L-glutamate + NH4(+). It carries out the reaction UTP + NH4(+) + ATP = CTP + ADP + phosphate + 2 H(+). Its pathway is pyrimidine metabolism; CTP biosynthesis via de novo pathway; CTP from UDP: step 2/2. With respect to regulation, allosterically activated by GTP, when glutamine is the substrate; GTP has no effect on the reaction when ammonia is the substrate. The allosteric effector GTP functions by stabilizing the protein conformation that binds the tetrahedral intermediate(s) formed during glutamine hydrolysis. Inhibited by the product CTP, via allosteric rather than competitive inhibition. Functionally, catalyzes the ATP-dependent amination of UTP to CTP with either L-glutamine or ammonia as the source of nitrogen. Regulates intracellular CTP levels through interactions with the four ribonucleotide triphosphates. In Mycoplasma mycoides subsp. mycoides SC (strain CCUG 32753 / NCTC 10114 / PG1), this protein is CTP synthase.